Reading from the N-terminus, the 72-residue chain is Translation initiation factor IF-1 (72 aa).

One can recognise an S1-like domain in the interval 1–72 (MAKEDVIEIE…TRGRITYRFK (72 aa)).

It belongs to the IF-1 family. As to quaternary structure, component of the 30S ribosomal translation pre-initiation complex which assembles on the 30S ribosome in the order IF-2 and IF-3, IF-1 and N-formylmethionyl-tRNA(fMet); mRNA recruitment can occur at any time during PIC assembly.

The protein localises to the cytoplasm. In terms of biological role, one of the essential components for the initiation of protein synthesis. Stabilizes the binding of IF-2 and IF-3 on the 30S subunit to which N-formylmethionyl-tRNA(fMet) subsequently binds. Helps modulate mRNA selection, yielding the 30S pre-initiation complex (PIC). Upon addition of the 50S ribosomal subunit IF-1, IF-2 and IF-3 are released leaving the mature 70S translation initiation complex. This Streptococcus mutans serotype c (strain ATCC 700610 / UA159) protein is Translation initiation factor IF-1.